Consider the following 568-residue polypeptide: K(+) efflux antiporter 5 (568 aa).

Positions 1-20 (MARFAVIGLTFLLLLGTSLS) are cleaved as a signal peptide. Positions 59 to 78 (EFSENDSPEGSDGASFNSSV) are disordered. A run of 12 helical transmembrane segments spans residues 154 to 174 (LISDLVVIIVFAAIGGIVFSC), 178 to 198 (PVIVGYLLAGSIIGPGGLKFI), 201 to 221 (MVQVETVAQFGVVFLLFALGL), 230 to 250 (VVGPVAVLGGLLQIVLLMFLC), 264 to 284 (GIFVGAFLSMSSTAVVVKFLV), 298 to 318 (IGILIFQDCVVGLLFALLPVL), 334 to 354 (LLLILSIYLTVASLLTWSFVP), 389 to 409 (LGLSLELGSFVAGVMLSTTEF), 422 to 442 (NLFAALFLSSIGMLINVHFLW), 447 to 467 (ILLASVILVIVIKTAIAAVVV), 476 to 496 (ISFHVGVLLAQIGEFAFVLLS), and 510 to 530 (LLLLGTTALSLVTTPLLFKLI).

The protein belongs to the monovalent cation:proton antiporter 2 (CPA2) transporter (TC 2.A.37) family. KEA (TC 2.A.37.1) subfamily. Expressed in roots, stems, leaves, flowers and silique.

The protein resides in the golgi apparatus membrane. The protein localises to the golgi apparatus. Its subcellular location is the trans-Golgi network membrane. It is found in the prevacuolar compartment membrane. It localises to the endomembrane system. It catalyses the reaction K(+)(in) + H(+)(out) = K(+)(out) + H(+)(in). Functionally, electroneutral K(+)/H(+) efflux antiporter involved in K(+) homeostasis and osmotic adjustment. Together with KEA4 and KEA6, promotes growth and development, and facilitates endosomal pH and ions homeostasis, as well as salt tolerance (e.g. K(+), NaCl and LiCl), probably by supporting cell wall biosynthesis during rapid etiolated seedling growth. In Arabidopsis thaliana (Mouse-ear cress), this protein is K(+) efflux antiporter 5.